Consider the following 225-residue polypeptide: MSEDHFDDEHEGHGGGGGSRHPMAARFRGYLPVVVDVETGGFNSATDALLEIAAVTIGMDEKGFVFPEHTYFFRVEPFEGANIEAAALEFTGIKLDHPLRMAVSEETAMNDIFRGVRKALKANGCKRAVLVGHNASFDLGFVNAAVARMDMKRNPFHPFSSFDTATLAGLAYGQTVLAKACQAAGIDFDGREAHSARYDTEKTAELFCGIVNRWKEMGGWQDFDD.

The disordered stretch occupies residues 1–21; it reads MSEDHFDDEHEGHGGGGGSRH. Positions 33–207 constitute an Exonuclease domain; sequence VVVDVETGGF…YDTEKTAELF (175 aa). Positions 36, 38, 194, and 199 each coordinate Mg(2+). His194 serves as the catalytic Proton donor/acceptor.

It belongs to the RNase T family. Homodimer. It depends on Mg(2+) as a cofactor.

In terms of biological role, trims short 3' overhangs of a variety of RNA species, leaving a one or two nucleotide 3' overhang. Responsible for the end-turnover of tRNA: specifically removes the terminal AMP residue from uncharged tRNA (tRNA-C-C-A). Also appears to be involved in tRNA biosynthesis. The chain is Ribonuclease T from Pseudomonas syringae pv. syringae (strain B728a).